Consider the following 2386-residue polypeptide: Protein kinase rad3 (2386 aa).

In terms of domain architecture, FAT spans 1386 to 1943; that stretch reads TLGIVSLNCG…LWQLMATIKS (558 aa). The PI3K/PI4K catalytic domain occupies 2052 to 2370; the sequence is FEDEVDIMNS…QIQELIKSAV (319 aa). Residues 2058-2064 are G-loop; it reads IMNSLQK. The catalytic loop stretch occupies residues 2227-2235; sequence GLGDRHGEN. The tract at residues 2247 to 2271 is activation loop; it reads HVDFNCLFDKGLTFEKPEKVPFRLT. Positions 2354–2386 constitute an FATC domain; the sequence is IPLSIEGQIQELIKSAVNPKNLVEMYIGWAAYF.

The protein belongs to the PI3/PI4-kinase family. ATM subfamily. As to quaternary structure, interacts with crb2 (via BRCT domain). Interacts with chk1.

It localises to the nucleus. It catalyses the reaction L-seryl-[protein] + ATP = O-phospho-L-seryl-[protein] + ADP + H(+). It carries out the reaction L-threonyl-[protein] + ATP = O-phospho-L-threonyl-[protein] + ADP + H(+). Serine/threonine kinase which activates checkpoint signaling upon genotoxic stresses. Involved in G2 arrest following DNA damage where it phosphorylates chk1. Phosphorylation of 'Thr-73' and 'Ser-80' of checkpoint mediator crb2 promotes its interaction with chk1. It is also involved in the dependence of mitosis on the completion of DNA replication. This Schizosaccharomyces pombe (strain 972 / ATCC 24843) (Fission yeast) protein is Protein kinase rad3 (rad3).